A 156-amino-acid chain; its full sequence is RNA polymerase sigma factor SigS (156 aa).

Residues 29–44 (EYYQLLLIKMWQLSQI) carry the Polymerase core binding motif. A DNA-binding region (H-T-H motif) is located at residues 126–145 (QFEIAEIMSLSLSTIKLIKT).

The protein belongs to the sigma-70 factor family.

Sigma factors are initiation factors that promote the attachment of RNA polymerase to specific initiation sites and are then released. Sigma-S contributes to the protection against external stress, thus playing a role in cellular fitness and survival. In Staphylococcus aureus (strain bovine RF122 / ET3-1), this protein is RNA polymerase sigma factor SigS (sigS).